Consider the following 316-residue polypeptide: Methionyl-tRNA formyltransferase (316 aa).

112 to 115 (SLLP) contributes to the (6S)-5,6,7,8-tetrahydrofolate binding site.

This sequence belongs to the Fmt family.

The enzyme catalyses L-methionyl-tRNA(fMet) + (6R)-10-formyltetrahydrofolate = N-formyl-L-methionyl-tRNA(fMet) + (6S)-5,6,7,8-tetrahydrofolate + H(+). In terms of biological role, attaches a formyl group to the free amino group of methionyl-tRNA(fMet). The formyl group appears to play a dual role in the initiator identity of N-formylmethionyl-tRNA by promoting its recognition by IF2 and preventing the misappropriation of this tRNA by the elongation apparatus. The sequence is that of Methionyl-tRNA formyltransferase from Flavobacterium psychrophilum (strain ATCC 49511 / DSM 21280 / CIP 103535 / JIP02/86).